We begin with the raw amino-acid sequence, 407 residues long: Phosphopentomutase (407 aa).

Residues aspartate 10, aspartate 306, histidine 311, aspartate 347, histidine 348, and histidine 359 each coordinate Mn(2+).

This sequence belongs to the phosphopentomutase family. Mn(2+) serves as cofactor.

The protein localises to the cytoplasm. The enzyme catalyses 2-deoxy-alpha-D-ribose 1-phosphate = 2-deoxy-D-ribose 5-phosphate. It catalyses the reaction alpha-D-ribose 1-phosphate = D-ribose 5-phosphate. The protein operates within carbohydrate degradation; 2-deoxy-D-ribose 1-phosphate degradation; D-glyceraldehyde 3-phosphate and acetaldehyde from 2-deoxy-alpha-D-ribose 1-phosphate: step 1/2. In terms of biological role, isomerase that catalyzes the conversion of deoxy-ribose 1-phosphate (dRib-1-P) and ribose 1-phosphate (Rib-1-P) to deoxy-ribose 5-phosphate (dRib-5-P) and ribose 5-phosphate (Rib-5-P), respectively. The polypeptide is Phosphopentomutase (Escherichia coli (strain UTI89 / UPEC)).